The primary structure comprises 265 residues: Proline-rich protein 23B (265 aa).

Low complexity predominate over residues 1–18 (MVSRPRSPSAFPAPWWGQ). 2 disordered regions span residues 1–49 (MVSR…EDPA) and 226–265 (PSSP…LFQA). A compositionally biased stretch (pro residues) spans 226 to 237 (PSSPLQPLPPSP). Residues 256 to 265 (CKARRRLFQA) show a composition bias toward basic residues.

It belongs to the PRR23 family.

In Homo sapiens (Human), this protein is Proline-rich protein 23B (PRR23B).